We begin with the raw amino-acid sequence, 315 residues long: Bifunctional protein FolD (315 aa).

Residues 166 to 168 (GRS), S193, and I234 contribute to the NADP(+) site.

It belongs to the tetrahydrofolate dehydrogenase/cyclohydrolase family. In terms of assembly, homodimer.

The catalysed reaction is (6R)-5,10-methylene-5,6,7,8-tetrahydrofolate + NADP(+) = (6R)-5,10-methenyltetrahydrofolate + NADPH. It catalyses the reaction (6R)-5,10-methenyltetrahydrofolate + H2O = (6R)-10-formyltetrahydrofolate + H(+). It participates in one-carbon metabolism; tetrahydrofolate interconversion. Functionally, catalyzes the oxidation of 5,10-methylenetetrahydrofolate to 5,10-methenyltetrahydrofolate and then the hydrolysis of 5,10-methenyltetrahydrofolate to 10-formyltetrahydrofolate. This is Bifunctional protein FolD from Treponema pallidum (strain Nichols).